Consider the following 301-residue polypeptide: GTP cyclohydrolase FolE2 (301 aa).

Belongs to the GTP cyclohydrolase IV family.

It carries out the reaction GTP + H2O = 7,8-dihydroneopterin 3'-triphosphate + formate + H(+). The protein operates within cofactor biosynthesis; 7,8-dihydroneopterin triphosphate biosynthesis; 7,8-dihydroneopterin triphosphate from GTP: step 1/1. Converts GTP to 7,8-dihydroneopterin triphosphate. The polypeptide is GTP cyclohydrolase FolE2 (Pseudomonas syringae pv. syringae (strain B728a)).